The chain runs to 242 residues: Aspartate/glutamate leucyltransferase (242 aa).

The protein belongs to the R-transferase family. Bpt subfamily.

The protein localises to the cytoplasm. It catalyses the reaction N-terminal L-glutamyl-[protein] + L-leucyl-tRNA(Leu) = N-terminal L-leucyl-L-glutamyl-[protein] + tRNA(Leu) + H(+). The enzyme catalyses N-terminal L-aspartyl-[protein] + L-leucyl-tRNA(Leu) = N-terminal L-leucyl-L-aspartyl-[protein] + tRNA(Leu) + H(+). Functionally, functions in the N-end rule pathway of protein degradation where it conjugates Leu from its aminoacyl-tRNA to the N-termini of proteins containing an N-terminal aspartate or glutamate. The polypeptide is Aspartate/glutamate leucyltransferase (Chromobacterium violaceum (strain ATCC 12472 / DSM 30191 / JCM 1249 / CCUG 213 / NBRC 12614 / NCIMB 9131 / NCTC 9757 / MK)).